The following is an 85-amino-acid chain: Small ribosomal subunit protein bS18 (85 aa).

This sequence belongs to the bacterial ribosomal protein bS18 family. Part of the 30S ribosomal subunit. Forms a tight heterodimer with protein bS6.

Binds as a heterodimer with protein bS6 to the central domain of the 16S rRNA, where it helps stabilize the platform of the 30S subunit. This chain is Small ribosomal subunit protein bS18, found in Helicobacter pylori (strain Shi470).